Consider the following 722-residue polypeptide: Ras and EF-hand domain-containing protein (722 aa).

EF-hand domains are found at residues 5 to 39 and 39 to 74; these read DELS…ELKV and VSPS…ARGL. The segment covering 75–84 has biased composition (basic and acidic residues); it reads HMPEGKKDVE. The disordered stretch occupies residues 75-109; that stretch reads HMPEGKKDVEQGEPPKSPSTPDKEEKPEETSSPAW. Residues 156–335 are a coiled coil; sequence REIRLQSTEM…ANRKLHDSND (180 aa). Over residues 355 to 374 the composition is skewed to polar residues; the sequence is INTSPGSTISRNSPKLTRCT. Disordered regions lie at residues 355 to 384 and 439 to 491; these read INTS…PRSS and FHRS…SGAS. The span at 480-491 shows a compositional bias: low complexity; the sequence is SNPVSRSSSGAS. GTP-binding positions include 532 to 537, 635 to 638, and 672 to 673; these read AVGKSS, NKAD, and AK.

This sequence belongs to the small GTPase superfamily. Rab family. In terms of assembly, homodimer.

It is found in the cytoplasm. The protein resides in the perinuclear region. Its function is as follows. Binds predominantly GDP, and also GTP. The chain is Ras and EF-hand domain-containing protein (rasef) from Xenopus tropicalis (Western clawed frog).